The sequence spans 291 residues: Bis(5'-nucleosyl)-tetraphosphatase, symmetrical (291 aa).

Belongs to the Ap4A hydrolase family.

The catalysed reaction is P(1),P(4)-bis(5'-adenosyl) tetraphosphate + H2O = 2 ADP + 2 H(+). Hydrolyzes diadenosine 5',5'''-P1,P4-tetraphosphate to yield ADP. This Coxiella burnetii (strain RSA 331 / Henzerling II) protein is Bis(5'-nucleosyl)-tetraphosphatase, symmetrical.